The following is a 128-amino-acid chain: Azurin (128 aa).

The Plastocyanin-like domain maps to 1–128 (AECKVDVDST…SMMKGAVVLK (128 aa)). Cys3 and Cys26 are oxidised to a cystine. Cu cation contacts are provided by His46, Cys112, His117, and Met121.

The protein localises to the periplasm. Its function is as follows. Transfers electrons from cytochrome c551 to cytochrome oxidase. In Pseudomonas chlororaphis (Pseudomonas aureofaciens), this protein is Azurin.